Consider the following 396-residue polypeptide: NADH-quinone oxidoreductase subunit D (396 aa).

Belongs to the complex I 49 kDa subunit family. In terms of assembly, NDH-1 is composed of 14 different subunits. Subunits NuoB, C, D, E, F, and G constitute the peripheral sector of the complex.

Its subcellular location is the cell inner membrane. It carries out the reaction a quinone + NADH + 5 H(+)(in) = a quinol + NAD(+) + 4 H(+)(out). NDH-1 shuttles electrons from NADH, via FMN and iron-sulfur (Fe-S) centers, to quinones in the respiratory chain. The immediate electron acceptor for the enzyme in this species is believed to be ubiquinone. Couples the redox reaction to proton translocation (for every two electrons transferred, four hydrogen ions are translocated across the cytoplasmic membrane), and thus conserves the redox energy in a proton gradient. The protein is NADH-quinone oxidoreductase subunit D of Bartonella tribocorum (strain CIP 105476 / IBS 506).